The primary structure comprises 141 residues: Large ribosomal subunit protein uL11B/uL11C (141 aa).

This sequence belongs to the universal ribosomal protein uL11 family. In terms of assembly, part of the ribosomal stalk of the 50S ribosomal subunit. Interacts with L10 and the large rRNA to form the base of the stalk. L10 forms an elongated spine to which L12 dimers bind in a sequential fashion forming a multimeric L10(L12)X complex. In terms of processing, one or more lysine residues are methylated.

In terms of biological role, forms part of the ribosomal stalk which helps the ribosome interact with GTP-bound translation factors. The protein is Large ribosomal subunit protein uL11B/uL11C of Bacillus cereus (strain ATCC 14579 / DSM 31 / CCUG 7414 / JCM 2152 / NBRC 15305 / NCIMB 9373 / NCTC 2599 / NRRL B-3711).